The sequence spans 80 residues: UPF0125 protein PD_1376 (80 aa).

It belongs to the UPF0125 (RnfH) family.

The protein is UPF0125 protein PD_1376 of Xylella fastidiosa (strain Temecula1 / ATCC 700964).